We begin with the raw amino-acid sequence, 253 residues long: UPF0280 protein Mbar_A3697 (253 aa).

Belongs to the UPF0280 family.

The polypeptide is UPF0280 protein Mbar_A3697 (Methanosarcina barkeri (strain Fusaro / DSM 804)).